The primary structure comprises 373 residues: MIMNDTTKVYNFSAGPAMIPREVLCQVKRELYNWKNLKKSIMEISHRSQEFISVVQEIKHNLRKLLHIPNSYKIVFCHGGARGQFSAIPMNFSKNANHSSHNNVVDYINSGYWSYSAALEAKKYCYTNILNVCKTNNKKQYILPMNTWEINDNSLYLHYCPNETIDGIAIHEEPKFNDKKIVIGDFSSTILSKRINLERYSFIYASSQKNIGPSGITLIIMHESLLQNINSYVPSILNYKILVNSNSMFNTPNTFSLYLSGLILKWIKKIGGIKEIEKRNIIKSNMLYNMIDSTDFYINDVVSNNRSRMNVPFTIINTKLHEIFVKEAYKYGLHALKGHNLKGGIRASIYNAMPIKGVLKLINFMKIFEKKYG.

Arginine 47 is a binding site for L-glutamate. Pyridoxal 5'-phosphate contacts are provided by residues 81 to 82 (AR), tryptophan 113, threonine 164, aspartate 185, and glutamine 208. Residue lysine 209 is modified to N6-(pyridoxal phosphate)lysine. 250–251 (NT) serves as a coordination point for pyridoxal 5'-phosphate.

The protein belongs to the class-V pyridoxal-phosphate-dependent aminotransferase family. SerC subfamily. In terms of assembly, homodimer. The cofactor is pyridoxal 5'-phosphate.

The protein resides in the cytoplasm. It carries out the reaction O-phospho-L-serine + 2-oxoglutarate = 3-phosphooxypyruvate + L-glutamate. The enzyme catalyses 4-(phosphooxy)-L-threonine + 2-oxoglutarate = (R)-3-hydroxy-2-oxo-4-phosphooxybutanoate + L-glutamate. It participates in amino-acid biosynthesis; L-serine biosynthesis; L-serine from 3-phospho-D-glycerate: step 2/3. Its pathway is cofactor biosynthesis; pyridoxine 5'-phosphate biosynthesis; pyridoxine 5'-phosphate from D-erythrose 4-phosphate: step 3/5. Functionally, catalyzes the reversible conversion of 3-phosphohydroxypyruvate to phosphoserine and of 3-hydroxy-2-oxo-4-phosphonooxybutanoate to phosphohydroxythreonine. The protein is Phosphoserine aminotransferase of Buchnera aphidicola subsp. Baizongia pistaciae (strain Bp).